The sequence spans 671 residues: UvrABC system protein C (671 aa).

The tract at residues 1-20 (MPHLPDSMSPEAPAGPAPAT) is disordered. Residues 10-20 (PEAPAGPAPAT) show a composition bias toward low complexity. The GIY-YIG domain maps to 37–115 (PLPGVYRYFD…IKTLNPKYNI (79 aa)). The UVR domain maps to 232-267 (RQVMEALEARMMAHAEKLEFEQAAELRNQVAALSNV).

The protein belongs to the UvrC family. In terms of assembly, interacts with UvrB in an incision complex.

Its subcellular location is the cytoplasm. In terms of biological role, the UvrABC repair system catalyzes the recognition and processing of DNA lesions. UvrC both incises the 5' and 3' sides of the lesion. The N-terminal half is responsible for the 3' incision and the C-terminal half is responsible for the 5' incision. This Albidiferax ferrireducens (strain ATCC BAA-621 / DSM 15236 / T118) (Rhodoferax ferrireducens) protein is UvrABC system protein C.